The following is a 602-amino-acid chain: Isocitrate dehydrogenase kinase/phosphatase (602 aa).

Residues 327 to 333 (APGIKGM) and Lys348 contribute to the ATP site. Asp383 is a catalytic residue.

The protein belongs to the AceK family.

It is found in the cytoplasm. It carries out the reaction L-seryl-[isocitrate dehydrogenase] + ATP = O-phospho-L-seryl-[isocitrate dehydrogenase] + ADP + H(+). Bifunctional enzyme which can phosphorylate or dephosphorylate isocitrate dehydrogenase (IDH) on a specific serine residue. This is a regulatory mechanism which enables bacteria to bypass the Krebs cycle via the glyoxylate shunt in response to the source of carbon. When bacteria are grown on glucose, IDH is fully active and unphosphorylated, but when grown on acetate or ethanol, the activity of IDH declines drastically concomitant with its phosphorylation. The chain is Isocitrate dehydrogenase kinase/phosphatase from Paraburkholderia phymatum (strain DSM 17167 / CIP 108236 / LMG 21445 / STM815) (Burkholderia phymatum).